A 222-amino-acid chain; its full sequence is Germin-like protein 11-1 (222 aa).

Residues 1–23 (MKLSTVLCCYLLLLGLFAPEIIS) form the signal peptide. Cysteines 32 and 49 form a disulfide. In terms of domain architecture, Cupin type-1 spans 72–195 (DNMVRSSANI…AMFAPDSEVA (124 aa)). His-111, His-113, Glu-118, and His-157 together coordinate Mn(2+).

This sequence belongs to the germin family. In terms of assembly, oligomer (believed to be a pentamer but probably hexamer).

Its subcellular location is the secreted. It is found in the extracellular space. The protein localises to the apoplast. In terms of biological role, may play a role in plant defense. Probably has no oxalate oxidase activity even if the active site is conserved. The chain is Germin-like protein 11-1 from Oryza sativa subsp. japonica (Rice).